We begin with the raw amino-acid sequence, 344 residues long: N-acetyl-gamma-glutamyl-phosphate reductase (344 aa).

Cysteine 148 is an active-site residue.

It belongs to the NAGSA dehydrogenase family. Type 1 subfamily.

Its subcellular location is the cytoplasm. The enzyme catalyses N-acetyl-L-glutamate 5-semialdehyde + phosphate + NADP(+) = N-acetyl-L-glutamyl 5-phosphate + NADPH + H(+). The protein operates within amino-acid biosynthesis; L-arginine biosynthesis; N(2)-acetyl-L-ornithine from L-glutamate: step 3/4. Catalyzes the NADPH-dependent reduction of N-acetyl-5-glutamyl phosphate to yield N-acetyl-L-glutamate 5-semialdehyde. In Geobacillus kaustophilus (strain HTA426), this protein is N-acetyl-gamma-glutamyl-phosphate reductase.